We begin with the raw amino-acid sequence, 218 residues long: Uracil-DNA glycosylase (218 aa).

The Proton acceptor role is filled by Asp68.

It belongs to the uracil-DNA glycosylase (UDG) superfamily. UNG family. In terms of assembly, homodimer. Interacts with protein OPG148. Component of the Uracil-DNA glycosylase(UDG)-OPG148-polymerase complex; OPG148 and UDG form a heterodimeric processivity factor that associates with OPG71 to form the processive polymerase holoenzyme.

It carries out the reaction Hydrolyzes single-stranded DNA or mismatched double-stranded DNA and polynucleotides, releasing free uracil.. Plays an essential role in viral replication as a component of the DNA polymerase processivity factor. Excises uracil residues from the DNA which can arise as a result of misincorporation of dUMP residues by DNA polymerase or due to deamination of cytosine. The sequence is that of Uracil-DNA glycosylase (OPG116) from Variola virus.